The sequence spans 366 residues: 1-deoxy-D-xylulose 5-phosphate reductoisomerase (366 aa).

NADPH-binding residues include Thr7, Gly8, Ser9, Ile10, Gly31, Lys32, Asn33, and Asn113. Lys114 is a binding site for 1-deoxy-D-xylulose 5-phosphate. Glu115 is an NADPH binding site. Asp133 serves as a coordination point for Mn(2+). 1-deoxy-D-xylulose 5-phosphate is bound by residues Ser134, Glu135, Ser158, and His181. Position 135 (Glu135) interacts with Mn(2+). Gly187 is an NADPH binding site. Ser194, Asn199, Lys200, and Glu203 together coordinate 1-deoxy-D-xylulose 5-phosphate. Glu203 serves as a coordination point for Mn(2+).

Belongs to the DXR family. The cofactor is Mg(2+). Requires Mn(2+) as cofactor.

It catalyses the reaction 2-C-methyl-D-erythritol 4-phosphate + NADP(+) = 1-deoxy-D-xylulose 5-phosphate + NADPH + H(+). It functions in the pathway isoprenoid biosynthesis; isopentenyl diphosphate biosynthesis via DXP pathway; isopentenyl diphosphate from 1-deoxy-D-xylulose 5-phosphate: step 1/6. Catalyzes the NADPH-dependent rearrangement and reduction of 1-deoxy-D-xylulose-5-phosphate (DXP) to 2-C-methyl-D-erythritol 4-phosphate (MEP). This Helicobacter pylori (strain G27) protein is 1-deoxy-D-xylulose 5-phosphate reductoisomerase.